A 133-amino-acid polypeptide reads, in one-letter code: Surface presentation of antigens protein SpaK (133 aa).

This sequence belongs to the SpaK family. Homodimer.

Its function is as follows. Required for surface presentation of invasion plasmid antigens. Chaperone specialized in the storage of effectors within the bacterial cytoplasm, maintaining them in a secretion-competent state, and allowing their immediate delivery to target cells upon contact of the bacterium with the host cells. Has been shown to chaperone IpaA, IpgB1, OspC3 and probably also OspB. The protein is Surface presentation of antigens protein SpaK (spaK) of Shigella flexneri.